A 266-amino-acid polypeptide reads, in one-letter code: 4-hydroxy-tetrahydrodipicolinate reductase (266 aa).

10–15 is an NAD(+) binding site; that stretch reads GPRGRM. Lys-38 is an NADP(+) binding site. NAD(+)-binding positions include 99 to 101 and 125 to 128; these read GTT and APNF. Residue His-155 is the Proton donor/acceptor of the active site. Residue His-156 coordinates (S)-2,3,4,5-tetrahydrodipicolinate. Lys-159 (proton donor) is an active-site residue. 165-166 provides a ligand contact to (S)-2,3,4,5-tetrahydrodipicolinate; sequence GT.

The protein belongs to the DapB family.

The protein resides in the cytoplasm. The catalysed reaction is (S)-2,3,4,5-tetrahydrodipicolinate + NAD(+) + H2O = (2S,4S)-4-hydroxy-2,3,4,5-tetrahydrodipicolinate + NADH + H(+). It carries out the reaction (S)-2,3,4,5-tetrahydrodipicolinate + NADP(+) + H2O = (2S,4S)-4-hydroxy-2,3,4,5-tetrahydrodipicolinate + NADPH + H(+). The protein operates within amino-acid biosynthesis; L-lysine biosynthesis via DAP pathway; (S)-tetrahydrodipicolinate from L-aspartate: step 4/4. Functionally, catalyzes the conversion of 4-hydroxy-tetrahydrodipicolinate (HTPA) to tetrahydrodipicolinate. The protein is 4-hydroxy-tetrahydrodipicolinate reductase of Bacillus anthracis (strain A0248).